Here is a 400-residue protein sequence, read N- to C-terminus: Casein kinase I homolog hhp2 (400 aa).

Residues 12 to 278 form the Protein kinase domain; sequence YRIGRKIGSG…YLRKLFRDLL (267 aa). ATP is bound by residues 18-26 and Lys41; that span reads IGSGSFGQI. Asp131 (proton acceptor) is an active-site residue. The interval 330–352 is disordered; sequence PNYSSIPLPAERNPKTPQSFSTN.

This sequence belongs to the protein kinase superfamily. CK1 Ser/Thr protein kinase family. Casein kinase I subfamily.

Its subcellular location is the nucleus. It carries out the reaction L-seryl-[protein] + ATP = O-phospho-L-seryl-[protein] + ADP + H(+). The catalysed reaction is L-threonyl-[protein] + ATP = O-phospho-L-threonyl-[protein] + ADP + H(+). Functionally, involved in DNA repair. May regulate the activity of protein(s) involved in double strand break repair caused by gamma rays. This is Casein kinase I homolog hhp2 (hhp2) from Schizosaccharomyces pombe (strain 972 / ATCC 24843) (Fission yeast).